Consider the following 89-residue polypeptide: NADH-ubiquinone oxidoreductase chain 4L (89 aa).

The next 3 membrane-spanning stretches (helical) occupy residues 1–21, 22–42, and 55–75; these read MNFS…NRKN, IILM…LILI, and FAVY…GILV.

Belongs to the complex I subunit 4L family.

The protein resides in the mitochondrion membrane. It catalyses the reaction a ubiquinone + NADH + 5 H(+)(in) = a ubiquinol + NAD(+) + 4 H(+)(out). Its function is as follows. Core subunit of the mitochondrial membrane respiratory chain NADH dehydrogenase (Complex I) that is believed to belong to the minimal assembly required for catalysis. Complex I functions in the transfer of electrons from NADH to the respiratory chain. The immediate electron acceptor for the enzyme is believed to be ubiquinone. In Aspergillus niger, this protein is NADH-ubiquinone oxidoreductase chain 4L (nd4L).